Consider the following 71-residue polypeptide: Protein MTH_1184 (71 aa).

The protein is Protein MTH_1184 of Methanothermobacter thermautotrophicus (strain ATCC 29096 / DSM 1053 / JCM 10044 / NBRC 100330 / Delta H) (Methanobacterium thermoautotrophicum).